We begin with the raw amino-acid sequence, 126 residues long: Large ribosomal subunit protein bL17 (126 aa).

It belongs to the bacterial ribosomal protein bL17 family. In terms of assembly, part of the 50S ribosomal subunit. Contacts protein L32.

The polypeptide is Large ribosomal subunit protein bL17 (Lysinibacillus sphaericus (strain C3-41)).